The primary structure comprises 295 residues: Accessory protein VasW (295 aa).

Its function is as follows. Plays an accessory role in VasX-mediated bacterial killing. The chain is Accessory protein VasW from Vibrio cholerae serotype O1 (strain ATCC 39315 / El Tor Inaba N16961).